We begin with the raw amino-acid sequence, 466 residues long: Histidine--tRNA ligase (466 aa).

This sequence belongs to the class-II aminoacyl-tRNA synthetase family. In terms of assembly, homodimer.

Its subcellular location is the cytoplasm. It catalyses the reaction tRNA(His) + L-histidine + ATP = L-histidyl-tRNA(His) + AMP + diphosphate + H(+). This chain is Histidine--tRNA ligase, found in Bifidobacterium animalis subsp. lactis (strain AD011).